Here is a 259-residue protein sequence, read N- to C-terminus: 3-deoxy-manno-octulosonate cytidylyltransferase (259 aa).

This sequence belongs to the KdsB family.

It is found in the cytoplasm. The enzyme catalyses 3-deoxy-alpha-D-manno-oct-2-ulosonate + CTP = CMP-3-deoxy-beta-D-manno-octulosonate + diphosphate. It participates in nucleotide-sugar biosynthesis; CMP-3-deoxy-D-manno-octulosonate biosynthesis; CMP-3-deoxy-D-manno-octulosonate from 3-deoxy-D-manno-octulosonate and CTP: step 1/1. It functions in the pathway bacterial outer membrane biogenesis; lipopolysaccharide biosynthesis. Activates KDO (a required 8-carbon sugar) for incorporation into bacterial lipopolysaccharide in Gram-negative bacteria. This chain is 3-deoxy-manno-octulosonate cytidylyltransferase, found in Protochlamydia amoebophila (strain UWE25).